The chain runs to 635 residues: Threonine--tRNA ligase (635 aa).

In terms of domain architecture, TGS spans 1–61; the sequence is MITVRLPDGS…EQDSDLSIIT (61 aa). The segment at 242-533 is catalytic; it reads DHRKLGRALD…LIENHAGALP (292 aa). Zn(2+) contacts are provided by Cys333, His384, and His510.

It belongs to the class-II aminoacyl-tRNA synthetase family. Homodimer. Requires Zn(2+) as cofactor.

The protein resides in the cytoplasm. The enzyme catalyses tRNA(Thr) + L-threonine + ATP = L-threonyl-tRNA(Thr) + AMP + diphosphate + H(+). Its function is as follows. Catalyzes the attachment of threonine to tRNA(Thr) in a two-step reaction: L-threonine is first activated by ATP to form Thr-AMP and then transferred to the acceptor end of tRNA(Thr). Also edits incorrectly charged L-seryl-tRNA(Thr). The protein is Threonine--tRNA ligase of Herminiimonas arsenicoxydans.